We begin with the raw amino-acid sequence, 372 residues long: D-alanine--D-alanine ligase (372 aa).

The ATP-grasp domain maps to Lys145–Glu349. ATP is bound at residue Asp176 to Glu231. Residues Asp303, Glu316, and Asn318 each coordinate Mg(2+).

It belongs to the D-alanine--D-alanine ligase family. The cofactor is Mg(2+). Mn(2+) is required as a cofactor.

The protein resides in the cytoplasm. It catalyses the reaction 2 D-alanine + ATP = D-alanyl-D-alanine + ADP + phosphate + H(+). Its pathway is cell wall biogenesis; peptidoglycan biosynthesis. Its function is as follows. Cell wall formation. The polypeptide is D-alanine--D-alanine ligase (Coxiella burnetii (strain CbuK_Q154) (Coxiella burnetii (strain Q154))).